A 358-amino-acid polypeptide reads, in one-letter code: Protein ocs (358 aa).

Belongs to the lysopine/nopaline/octopine/opine/vitopine dehydrogenases family. As to quaternary structure, monomer.

The catalysed reaction is D-octopine + NAD(+) + H2O = L-arginine + pyruvate + NADH + H(+). It catalyses the reaction D-lysopine + NADP(+) + H2O = L-lysine + pyruvate + NADPH + H(+). Its function is as follows. Reductive condensation of pyruvate and arginine, lysine, histidine, or octopine to form octopine, lysopine, histopine, or octopinic acid, respectively. NADPH is the preferred cofactor, but NADH can also be used. The protein is Protein ocs (ocs) of Agrobacterium tumefaciens (strain Ach5).